A 424-amino-acid polypeptide reads, in one-letter code: Glutamate-1-semialdehyde 2,1-aminomutase (424 aa).

The residue at position 265 (Lys265) is an N6-(pyridoxal phosphate)lysine.

This sequence belongs to the class-III pyridoxal-phosphate-dependent aminotransferase family. HemL subfamily. In terms of assembly, homodimer. Pyridoxal 5'-phosphate serves as cofactor.

It is found in the cytoplasm. It catalyses the reaction (S)-4-amino-5-oxopentanoate = 5-aminolevulinate. It functions in the pathway porphyrin-containing compound metabolism; protoporphyrin-IX biosynthesis; 5-aminolevulinate from L-glutamyl-tRNA(Glu): step 2/2. The chain is Glutamate-1-semialdehyde 2,1-aminomutase from Alkaliphilus oremlandii (strain OhILAs) (Clostridium oremlandii (strain OhILAs)).